Reading from the N-terminus, the 258-residue chain is Imidazole glycerol phosphate synthase subunit HisF (258 aa).

Active-site residues include Asp11 and Asp130.

Belongs to the HisA/HisF family. As to quaternary structure, heterodimer of HisH and HisF.

Its subcellular location is the cytoplasm. The enzyme catalyses 5-[(5-phospho-1-deoxy-D-ribulos-1-ylimino)methylamino]-1-(5-phospho-beta-D-ribosyl)imidazole-4-carboxamide + L-glutamine = D-erythro-1-(imidazol-4-yl)glycerol 3-phosphate + 5-amino-1-(5-phospho-beta-D-ribosyl)imidazole-4-carboxamide + L-glutamate + H(+). It participates in amino-acid biosynthesis; L-histidine biosynthesis; L-histidine from 5-phospho-alpha-D-ribose 1-diphosphate: step 5/9. Functionally, IGPS catalyzes the conversion of PRFAR and glutamine to IGP, AICAR and glutamate. The HisF subunit catalyzes the cyclization activity that produces IGP and AICAR from PRFAR using the ammonia provided by the HisH subunit. The chain is Imidazole glycerol phosphate synthase subunit HisF from Bradyrhizobium sp. (strain BTAi1 / ATCC BAA-1182).